The primary structure comprises 528 residues: Tyrosine--tRNA ligase, cytoplasmic (528 aa).

Tyr39 is an L-tyrosine binding site. The 'HIGH' region signature appears at 44–52; the sequence is TTGKPHVAY. Residues Tyr166, Gln170, Asp173, and Gln188 each coordinate L-tyrosine. The short motif at 222-226 is the 'KMSKS' region element; that stretch reads KMSSS. Residues 242 to 247 carry the Nuclear localization signal motif; sequence KKKLKK. The disordered stretch occupies residues 335 to 364; the sequence is KLSNDAYPGASKQKTVPKGSTKNSGPEEID. Positions 346 to 358 are enriched in polar residues; it reads KQKTVPKGSTKNS. Residues 364–468 form the tRNA-binding domain; that stretch reads DPSLLDLRVG…TGSAPGERIY (105 aa).

Belongs to the class-I aminoacyl-tRNA synthetase family. As to quaternary structure, homodimer.

It is found in the cytoplasm. Its subcellular location is the nucleus. The catalysed reaction is tRNA(Tyr) + L-tyrosine + ATP = L-tyrosyl-tRNA(Tyr) + AMP + diphosphate + H(+). Functionally, catalyzes the attachment of tyrosine to tRNA(Tyr) in a two-step reaction: tyrosine is first activated by ATP to form Tyr-AMP and then transferred to the acceptor end of tRNA(Tyr). This Xenopus tropicalis (Western clawed frog) protein is Tyrosine--tRNA ligase, cytoplasmic (yars1).